The primary structure comprises 339 residues: Fructose-1,6-bisphosphatase, cytosolic (339 aa).

Glu-70, Glu-99, Asp-120, Leu-122, and Asp-123 together coordinate Mg(2+). Substrate-binding positions include 123–126 (DGSS), Asn-214, Tyr-246, Tyr-266, and Lys-276. Glu-282 is a Mg(2+) binding site.

The protein belongs to the FBPase class 1 family. Mg(2+) serves as cofactor.

It is found in the cytoplasm. The enzyme catalyses beta-D-fructose 1,6-bisphosphate + H2O = beta-D-fructose 6-phosphate + phosphate. The sequence is that of Fructose-1,6-bisphosphatase, cytosolic from Brassica napus (Rape).